The following is a 115-amino-acid chain: Protein Diedel (115 aa).

An N-terminal signal peptide occupies residues M1–S24. 5 disulfides stabilise this stretch: C26-C81, C27-C87, C42-C55, C60-C71, and C76-C83.

This sequence belongs to the Diedel family. As to expression, detected in hemolymph (at protein level). Also expressed in the fat body and is probably synthesized in the fat body and secreted into the hemolymph.

The protein resides in the secreted. Its function is as follows. Cytokine which promotes survival following infection by Sindbis virus by suppressing the immune deficiency pathway. Following infection by the enteropathogenic bacteria E.carotovora limits intestinal stem cells proliferation. When secreted from muscle or adipose tissue, can attenuate age-related intestinal tissue degeneration by inhibiting apoptosis. This chain is Protein Diedel, found in Drosophila melanogaster (Fruit fly).